A 185-amino-acid chain; its full sequence is Elongation factor P (185 aa).

Belongs to the elongation factor P family.

The protein localises to the cytoplasm. It participates in protein biosynthesis; polypeptide chain elongation. Its function is as follows. Involved in peptide bond synthesis. Stimulates efficient translation and peptide-bond synthesis on native or reconstituted 70S ribosomes in vitro. Probably functions indirectly by altering the affinity of the ribosome for aminoacyl-tRNA, thus increasing their reactivity as acceptors for peptidyl transferase. The polypeptide is Elongation factor P (Oleidesulfovibrio alaskensis (strain ATCC BAA-1058 / DSM 17464 / G20) (Desulfovibrio alaskensis)).